Consider the following 1052-residue polypeptide: uncharacterized protein (1052 aa).

It belongs to the IIV-6 050L family.

This is an uncharacterized protein from Invertebrate iridescent virus 6 (IIV-6).